The primary structure comprises 353 residues: MAHRRIALAVLVTLLLSAFRPCLAQQSNDDTSKHHRSATAGGFTPTTVVVLVALITAFVLLTVFSVLINRCAQARAPPRRAFRSTASHQPVGGAAAASRASRGLDKEVVEAFPTAVYGDVKARMAAKSGPLECAVCLAEFADSDELRVLPACCHVFHPDCIDPWLAAAVTCPLCRANLTAPPVSLAAAESSDLTAPEEAVQEEESEELDEASLMATFTPESVIDFGATHDHEFDRAGYPHYRRTQSAMDAAPDRHTLRLPEHVMKELAADRRHRRAASLAGYPDSVERTPRWLTSLWRSVSWQRQSRADWDAGEEHGGSKRVHPVAGAQDETPSGSGSDGSKENSDSDALNRV.

The helical transmembrane segment at 48-68 (VVVLVALITAFVLLTVFSVLI) threads the bilayer. The RING-type; atypical zinc-finger motif lies at 133–175 (CAVCLAEFADSDELRVLPACCHVFHPDCIDPWLAAAVTCPLCR). Composition is skewed to basic and acidic residues over residues 308-318 (ADWDAGEEHGG) and 340-353 (GSKENSDSDALNRV). Residues 308–353 (ADWDAGEEHGGSKRVHPVAGAQDETPSGSGSDGSKENSDSDALNRV) form a disordered region.

The protein localises to the membrane. It carries out the reaction S-ubiquitinyl-[E2 ubiquitin-conjugating enzyme]-L-cysteine + [acceptor protein]-L-lysine = [E2 ubiquitin-conjugating enzyme]-L-cysteine + N(6)-ubiquitinyl-[acceptor protein]-L-lysine.. Its pathway is protein modification; protein ubiquitination. Functionally, possesses E3 ubiquitin-protein ligase in vitro. The chain is E3 ubiquitin-protein ligase Os03g0188200 from Oryza sativa subsp. japonica (Rice).